The following is a 137-amino-acid chain: Small ribosomal subunit protein uS12 (137 aa).

It belongs to the universal ribosomal protein uS12 family. As to quaternary structure, part of the 30S ribosomal subunit. Contacts proteins S8 and S17. May interact with IF1 in the 30S initiation complex.

Functionally, with S4 and S5 plays an important role in translational accuracy. Its function is as follows. Interacts with and stabilizes bases of the 16S rRNA that are involved in tRNA selection in the A site and with the mRNA backbone. Located at the interface of the 30S and 50S subunits, it traverses the body of the 30S subunit contacting proteins on the other side and probably holding the rRNA structure together. The combined cluster of proteins S8, S12 and S17 appears to hold together the shoulder and platform of the 30S subunit. The sequence is that of Small ribosomal subunit protein uS12 from Lactiplantibacillus plantarum (strain ATCC BAA-793 / NCIMB 8826 / WCFS1) (Lactobacillus plantarum).